A 275-amino-acid chain; its full sequence is Phosphite import ATP-binding protein PxtA (275 aa).

In terms of domain architecture, ABC transporter spans 11 to 252; the sequence is LRVDRLSVVY…QLERIYAGRS (242 aa). 44-51 contacts ATP; it reads GLSGAGKS. The interval 251–275 is disordered; sequence RSTTQPANAPAEPPVMLEPSLEMSR.

This sequence belongs to the ABC transporter superfamily. Phosphonates importer (TC 3.A.1.9.1) family. The complex is composed of two ATP-binding proteins (PtxA), two transmembrane proteins (PtxC) and a solute-binding protein (PtxB).

Its subcellular location is the cell inner membrane. The catalysed reaction is phosphite(out) + ATP + H2O = phosphite(in) + ADP + phosphate + H(+). Part of the ABC transporter complex PtxABC involved in phosphite import. Responsible for energy coupling to the transport system. This chain is Phosphite import ATP-binding protein PxtA (ptxA), found in Stutzerimonas stutzeri (Pseudomonas stutzeri).